Consider the following 302-residue polypeptide: Putative cyclin-D6-1 (302 aa).

It belongs to the cyclin family. Cyclin D subfamily.

This is Putative cyclin-D6-1 (CYCD6-1) from Arabidopsis thaliana (Mouse-ear cress).